A 701-amino-acid chain; its full sequence is MVVSTFTDMDTFPNNFPPGGDSGLTGSQSEFQKMLIDERLRCEHHKANYQTLKAEHTRLQNEHVKLQNELKHLFNEKQTQQEKLQLLLEELRGELVEKTKDLEEMKLQILTPQKLELLRAQIQQELETPMRERFRNLDEEVEKYRAVYNKLRYEHTFLKSEFEHQKEEYARILDEGKIKYESEIARLEEDKEELRNQLLNVDLTKDSKRVEQLAREKVYLCQKLKGLEAEVAELKAEKENSEAQVENAQRIQVRQLAEMQATVRSLEAEKQSANLRAERLEKELQSSSEQNTFLINKLHKAEREINTLSSKVKELKHSNKLEITDIKLETARAKSELERERNKIQSELDGLQSDNEILKAAVEHHKVLLVEKDRELIRKVQAAKEEGYQKLVVLQDEKLELENRLADLEKMKVEHDVWRQSEKDQYEEKLRASQMAEEITRKELQSVRLKLQQQIVTIENAEKEKNENSDLKQQISSLQIQVTSLAQSENDLLNSNQMLKEMVERLKQECRNFRSQAEKAQLEAEKTLEEKQIQWLEEKHKLHERITDREEKYNQAKEKLQRAAIAQKKRKSLHENKLKRLQEKVEVLEAKKEELETENQVLNRQNVPFEDYTRLQKRLKDIQRRHNEFRSLILVPNMPPTASINPVSFQSSAMVPSMELPFPPHMQEEQHQRELSLLRKRLEELETTQRKQLEELGSSGE.

Residues 1–14 (MVVSTFTDMDTFPN) show a composition bias toward polar residues. Residues 1 to 23 (MVVSTFTDMDTFPNNFPPGGDSG) are disordered. Coiled-coil stretches lie at residues 40–634 (LRCE…SLIL) and 665–698 (HMQEEQHQRELSLLRKRLEELETTQRKQLEELGS). Ser698 bears the Phosphoserine mark.

Belongs to the CEP83 family. Interacts with CEP164 and IFT20.

It is found in the cytoplasm. The protein resides in the cytoskeleton. The protein localises to the microtubule organizing center. Its subcellular location is the centrosome. It localises to the centriole. Its function is as follows. Component of the distal appendage region of the centriole involved in the initiation of primary cilium assembly. May collaborate with IFT20 in the trafficking of ciliary membrane proteins from the Golgi complex to the cilium during the initiation of primary cilium assembly. The protein is Centrosomal protein of 83 kDa (CEP83) of Homo sapiens (Human).